The primary structure comprises 216 residues: Thymidylate kinase (216 aa).

9 to 16 (GIEGSGKT) serves as a coordination point for ATP.

Belongs to the thymidylate kinase family.

The catalysed reaction is dTMP + ATP = dTDP + ADP. Its function is as follows. Phosphorylation of dTMP to form dTDP in both de novo and salvage pathways of dTTP synthesis. This Syntrophotalea carbinolica (strain DSM 2380 / NBRC 103641 / GraBd1) (Pelobacter carbinolicus) protein is Thymidylate kinase.